The sequence spans 468 residues: Phosphatidylinositol-binding clathrin assembly protein LAP (468 aa).

The 143-residue stretch at 16–158 (RHSLAGQGLA…LSYRAMAFDF (143 aa)) folds into the ENTH domain. Residues 438–468 (NAGDGTAKYDGGAGSSPFDWGATDDDGGAAQ) are disordered. Over residues 459–468 (ATDDDGGAAQ) the composition is skewed to acidic residues.

This sequence belongs to the PICALM/SNAP91 family. As to quaternary structure, binds clathrin and phosphatidylinositol 4,5-bisphosphate. In embryos, expression is seen in central and peripheral nervous systems (brain and ventral nerve cord) and Garland cells. Coexpressed with clathrin at presynaptic boutons of neuromuscular junctions.

It is found in the membrane. It localises to the clathrin-coated pit. Its subcellular location is the golgi apparatus. The protein localises to the cytoplasmic vesicle. The protein resides in the clathrin-coated vesicle. Its function is as follows. Assembly protein recruiting clathrin and adaptor protein complex 2 (AP2) to cell membranes at sites of coated-pit formation and clathrin-vesicle assembly. May be required to determine the amount of membrane to be recycled, possibly by regulating the size of the clathrin cage. Involved in AP2-dependent clathrin-mediated endocytosis at the neuromuscular junction. The chain is Phosphatidylinositol-binding clathrin assembly protein LAP (lap) from Drosophila melanogaster (Fruit fly).